The primary structure comprises 608 residues: Dextranase (608 aa).

The N-terminal stretch at 1–19 is a signal peptide; it reads MATMLKLLALTLAISESAI. Positions 20 to 34 are excised as a propeptide; it reads GAVMHPPGNSHPGTH. Residues N39, N571, and N574 are each glycosylated (N-linked (GlcNAc...) asparagine).

It belongs to the glycosyl hydrolase 49 family. In terms of processing, N-glycosylated.

The protein localises to the secreted. It carries out the reaction Endohydrolysis of (1-&gt;6)-alpha-D-glucosidic linkages in dextran.. This is Dextranase (DEX) from Talaromyces minioluteus (Filamentous fungus).